The primary structure comprises 364 residues: Nucleoporin SEH1 (364 aa).

WD repeat units follow at residues 10–49, 55–96, 111–152, 160–210, 217–258, and 275–314; these read DHKD…EWNC, THSG…SNDK, DSRT…NLSQ, SCKL…RKYA, TVTD…KESS, and GHNS…NWKC. The segment at 326-364 is disordered; the sequence is NGAAGQAGTPGAAGTPGGPASQNALQAVAGRKKAQLMPG. Positions 327 to 338 are enriched in low complexity; that stretch reads GAAGQAGTPGAA. Positions 355–364 are enriched in basic residues; it reads GRKKAQLMPG.

It belongs to the WD repeat SEC13 family. As to quaternary structure, component of the Nup107-160 subcomplex of the nuclear pore complex (NPC). The Nup107-160 subcomplex includes NUP160, NUP133, NUP107, NUP98, NUP85, NUP43, NUP37, SEH1 and SEC13. Component of the GATOR2 subcomplex, composed of MIOS, SEC13, SEH1L, WDR24 and WDR59. The GATOR2 complex interacts with CASTOR1 and CASTOR2; the interaction is negatively regulated by arginine. The GATOR2 complex interacts with SESN1, SESN2 and SESN3; the interaction is negatively regulated by amino acids.

It localises to the chromosome. The protein localises to the centromere. It is found in the kinetochore. Its subcellular location is the nucleus. The protein resides in the nuclear pore complex. It localises to the lysosome membrane. Its activity is regulated as follows. The GATOR2 complex is negatively regulated by the upstream amino acid sensors CASTOR1 and SESN2, which sequester the GATOR2 complex in absence of amino acids. In the presence of abundant amino acids, GATOR2 is released from CASTOR1 and SESN2 and activated. In terms of biological role, component of the Nup107-160 subcomplex of the nuclear pore complex (NPC). The Nup107-160 subcomplex is required for the assembly of a functional NPC. The Nup107-160 subcomplex is also required for normal kinetochore microtubule attachment, mitotic progression and chromosome segregation. This subunit plays a role in recruitment of the Nup107-160 subcomplex to the kinetochore. Its function is as follows. As a component of the GATOR2 complex, functions as an activator of the amino acid-sensing branch of the mTORC1 signaling pathway. The GATOR2 complex indirectly activates mTORC1 through the inhibition of the GATOR1 subcomplex. GATOR2 probably acts as an E3 ubiquitin-protein ligase toward GATOR1. In the presence of abundant amino acids, the GATOR2 complex mediates ubiquitination of the NPRL2 core component of the GATOR1 complex, leading to GATOR1 inactivation. In the absence of amino acids, GATOR2 is inhibited, activating the GATOR1 complex. The polypeptide is Nucleoporin SEH1 (seh1l) (Osmerus mordax (Rainbow smelt)).